A 227-amino-acid polypeptide reads, in one-letter code: PKHD-type hydroxylase Pden_4677 (227 aa).

The Fe2OG dioxygenase domain maps to 78–178; the sequence is HILPPMFNRY…RWASFFWAQS (101 aa). Fe cation is bound by residues His-96, Asp-98, and His-159. Arg-169 is a 2-oxoglutarate binding site.

Requires Fe(2+) as cofactor. It depends on L-ascorbate as a cofactor.

The polypeptide is PKHD-type hydroxylase Pden_4677 (Paracoccus denitrificans (strain Pd 1222)).